Here is a 294-residue protein sequence, read N- to C-terminus: MSGVDQIVKKFANLGEGDREAAMKAFLAMMPVSNEPVAEPVRKAPTAKKKVNGFMGFRSNYSPLFSYLPQKMRSPFMTILWQYDPYHNEWDFMCSVYSSIRTDLEEQNVTLQLWIHYAIGQMGLIDRDHYMASFGWRLGQTRNGTTDLFRTAIPMVRRNLQPMNGLCLLIKCLESGLSKHLTNPHPIIAKLQDPSFDMIWINKPPHHQQGHTDQADNSELGMPSLFPGNHAVAAEVDGIANLPLSHRTQQGDFGTEPGFSTQFDTMLDSILENGNHPSNSHYNMSLAMDLPMTG.

Residues 46–101 (TAKKKVNGFMGFRSNYSPLFSYLPQKMRSPFMTILWQYDPYHNEWDFMCSVYSSIR) constitute a DNA-binding region (alpha box).

The protein belongs to the MATALPHA1 family.

It localises to the nucleus. Mating type proteins are sequence specific DNA-binding proteins that act as master switches in fungal differentiation by controlling gene expression in a cell type-specific fashion. Transcriptional activator that induces the transcription of alpha-specific genes. The polypeptide is Mating type protein mtA-1 (MTA1) (Sordaria equina).